Consider the following 57-residue polypeptide: MAPTLYDFHHLPHVKTQNESKKALWVTLLLTMFFTAVEIIGGLISNSLALLSDSAHM.

The chain crosses the membrane as a helical span at residues 24-44; the sequence is LWVTLLLTMFFTAVEIIGGLI.

To cation A.eutrophus efflux system protein CzcD.

It is found in the cell membrane. This is an uncharacterized protein from Bacillus caldolyticus.